Reading from the N-terminus, the 354-residue chain is UDP-3-O-acylglucosamine N-acyltransferase (354 aa).

His247 acts as the Proton acceptor in catalysis.

This sequence belongs to the transferase hexapeptide repeat family. LpxD subfamily. As to quaternary structure, homotrimer.

The catalysed reaction is a UDP-3-O-[(3R)-3-hydroxyacyl]-alpha-D-glucosamine + a (3R)-hydroxyacyl-[ACP] = a UDP-2-N,3-O-bis[(3R)-3-hydroxyacyl]-alpha-D-glucosamine + holo-[ACP] + H(+). It participates in bacterial outer membrane biogenesis; LPS lipid A biosynthesis. Its function is as follows. Catalyzes the N-acylation of UDP-3-O-acylglucosamine using 3-hydroxyacyl-ACP as the acyl donor. Is involved in the biosynthesis of lipid A, a phosphorylated glycolipid that anchors the lipopolysaccharide to the outer membrane of the cell. The sequence is that of UDP-3-O-acylglucosamine N-acyltransferase from Chlamydia trachomatis serovar L2 (strain ATCC VR-902B / DSM 19102 / 434/Bu).